The primary structure comprises 282 residues: Bis(5'-nucleosyl)-tetraphosphatase, symmetrical (282 aa).

The protein belongs to the Ap4A hydrolase family. In terms of assembly, monomer.

The enzyme catalyses P(1),P(4)-bis(5'-adenosyl) tetraphosphate + H2O = 2 ADP + 2 H(+). In terms of biological role, hydrolyzes diadenosine 5',5'''-P1,P4-tetraphosphate to yield ADP. The chain is Bis(5'-nucleosyl)-tetraphosphatase, symmetrical from Escherichia coli O157:H7.